A 149-amino-acid polypeptide reads, in one-letter code: SsrA-binding protein (149 aa).

The protein belongs to the SmpB family.

The protein localises to the cytoplasm. Required for rescue of stalled ribosomes mediated by trans-translation. Binds to transfer-messenger RNA (tmRNA), required for stable association of tmRNA with ribosomes. tmRNA and SmpB together mimic tRNA shape, replacing the anticodon stem-loop with SmpB. tmRNA is encoded by the ssrA gene; the 2 termini fold to resemble tRNA(Ala) and it encodes a 'tag peptide', a short internal open reading frame. During trans-translation Ala-aminoacylated tmRNA acts like a tRNA, entering the A-site of stalled ribosomes, displacing the stalled mRNA. The ribosome then switches to translate the ORF on the tmRNA; the nascent peptide is terminated with the 'tag peptide' encoded by the tmRNA and targeted for degradation. The ribosome is freed to recommence translation, which seems to be the essential function of trans-translation. The polypeptide is SsrA-binding protein (Anaplasma marginale (strain Florida)).